The primary structure comprises 255 residues: uncharacterized protein (255 aa).

The signal sequence occupies residues 1–23 (MKRLNKLVLGINLLFLVISITAG). Cys24 carries N-palmitoyl cysteine lipidation. A lipid anchor (S-diacylglycerol cysteine) is attached at Cys24.

This sequence belongs to the staphylococcal tandem lipoprotein family.

The protein resides in the cell membrane. This is an uncharacterized protein from Staphylococcus aureus (strain MRSA252).